Here is a 656-residue protein sequence, read N- to C-terminus: Translation factor GUF1, mitochondrial (656 aa).

Residues 1 to 28 constitute a mitochondrion transit peptide; it reads MWKGLLQSTRAAWRGPCVRAPRLPFFRR. Residues 55 to 235 form the tr-type G domain; that stretch reads ERYRNFSIVA…NVIENIPGPD (181 aa). Residues 64 to 71, 128 to 132, and 182 to 185 each bind GTP; these read AHVDHGKS, DTPGH, and NKID.

The protein belongs to the TRAFAC class translation factor GTPase superfamily. Classic translation factor GTPase family. LepA subfamily.

The protein localises to the mitochondrion inner membrane. The enzyme catalyses GTP + H2O = GDP + phosphate + H(+). Its function is as follows. Promotes mitochondrial protein synthesis. May act as a fidelity factor of the translation reaction, by catalyzing a one-codon backward translocation of tRNAs on improperly translocated ribosomes. Binds to mitochondrial ribosomes in a GTP-dependent manner. The chain is Translation factor GUF1, mitochondrial from Yarrowia lipolytica (strain CLIB 122 / E 150) (Yeast).